The following is a 327-amino-acid chain: Dolichyl-phosphate beta-glucosyltransferase (327 aa).

Residues 1–15 (MIDLFINIASFTIYG) are Lumenal-facing. A helical membrane pass occupies residues 16–36 (IPVIPLFIIVFVILSYYLLLL). Residues 37–327 (HDESPLWLEK…YLLGIWKIKS (291 aa)) are Cytoplasmic-facing.

The protein belongs to the glycosyltransferase 2 family.

It is found in the endoplasmic reticulum membrane. It carries out the reaction a di-trans,poly-cis-dolichyl phosphate + UDP-alpha-D-glucose = a di-trans,poly-cis-dolichyl beta-D-glucosyl phosphate + UDP. It functions in the pathway protein modification; protein glycosylation. Endoplasmic reticulum membrane-bound UDP-glucose:dolichyl-phosphate glucosyltransferase involved in protein N-linked glycosylation. This Dictyostelium discoideum (Social amoeba) protein is Dolichyl-phosphate beta-glucosyltransferase (alg5).